Here is a 298-residue protein sequence, read N- to C-terminus: GTPase Era (298 aa).

One can recognise an Era-type G domain in the interval 3 to 170; the sequence is KSGFVAILGR…IKLLTDNLEE (168 aa). Residues 11–18 form a G1 region; sequence GRPNVGKS. 11–18 is a binding site for GTP; the sequence is GRPNVGKS. The tract at residues 37–41 is G2; the sequence is QTTRN. Positions 58–61 are G3; that stretch reads DTPG. GTP contacts are provided by residues 58 to 62 and 120 to 123; these read DTPGI and NKID. The G4 stretch occupies residues 120-123; that stretch reads NKID. A G5 region spans residues 149–151; that stretch reads ISA. A KH type-2 domain is found at 201–279; that stretch reads TQQEVPHSVA…YLETWVKVKK (79 aa).

The protein belongs to the TRAFAC class TrmE-Era-EngA-EngB-Septin-like GTPase superfamily. Era GTPase family. As to quaternary structure, monomer.

Its subcellular location is the cytoplasm. The protein resides in the cell membrane. An essential GTPase that binds both GDP and GTP, with rapid nucleotide exchange. Plays a role in 16S rRNA processing and 30S ribosomal subunit biogenesis and possibly also in cell cycle regulation and energy metabolism. The protein is GTPase Era of Streptococcus pyogenes serotype M2 (strain MGAS10270).